A 434-amino-acid polypeptide reads, in one-letter code: Glutamyl-tRNA reductase (434 aa).

Residues 49-52, S109, 114-116, and Q120 each bind substrate; these read TCNR and EPQ. C50 acts as the Nucleophile in catalysis. 189–194 provides a ligand contact to NADP(+); the sequence is GAGEMC.

It belongs to the glutamyl-tRNA reductase family. Homodimer.

The catalysed reaction is (S)-4-amino-5-oxopentanoate + tRNA(Glu) + NADP(+) = L-glutamyl-tRNA(Glu) + NADPH + H(+). It participates in porphyrin-containing compound metabolism; protoporphyrin-IX biosynthesis; 5-aminolevulinate from L-glutamyl-tRNA(Glu): step 1/2. Functionally, catalyzes the NADPH-dependent reduction of glutamyl-tRNA(Glu) to glutamate 1-semialdehyde (GSA). The sequence is that of Glutamyl-tRNA reductase from Geobacter sulfurreducens (strain ATCC 51573 / DSM 12127 / PCA).